Reading from the N-terminus, the 213-residue chain is High frequency lysogenization protein HflD homolog (213 aa).

Residues 79–126 (QGLNAELTRYTLSLMVLERKLSSAKGALDTLGNRINGLQRQLEHFDLQ) adopt a coiled-coil conformation.

It belongs to the HflD family.

The protein localises to the cytoplasm. The protein resides in the cell inner membrane. The polypeptide is High frequency lysogenization protein HflD homolog (Shigella flexneri serotype 5b (strain 8401)).